Consider the following 178-residue polypeptide: FXYD domain-containing ion transport regulator 5 (178 aa).

The N-terminal stretch at 1–21 (MSLSSRLCLLTIVALILPSRG) is a signal peptide. Residues 21–59 (GQTPKKPTSIFTADQTSATTRDNVPDPDQTSPGVQTTPL) show a composition bias toward polar residues. A disordered region spans residues 21 to 130 (GQTPKKPTSI…SYIEHPLDSN (110 aa)). Residues 22–145 (QTPKKPTSIF…YYDDTTLRKR (124 aa)) lie on the Extracellular side of the membrane. The span at 67 to 79 (TGSQTAAQTETQQ) shows a compositional bias: low complexity. The segment covering 80 to 100 (LTKMATSNPVSDPGPHTSSKK) has biased composition (polar residues). Residues 146–166 (GLLVAAVLFITGIIILTSGKC) traverse the membrane as a helical segment. The Cytoplasmic portion of the chain corresponds to 167–178 (RQLSQFCLNRHR).

This sequence belongs to the FXYD family. In terms of assembly, regulatory subunit of the sodium/potassium-transporting ATPase which is composed of a catalytic alpha subunit, a non-catalytic beta subunit and an additional regulatory subunit. The regulatory subunit, a member of the FXYD protein family, modulates the enzymatic activity in a tissue- and isoform-specific way by changing affinities of the Na+/K+-ATPase toward Na(+), K(+) or ATP. Post-translationally, glycosylated. In terms of tissue distribution, expressed mainly in epithelial tissue, such as lung, intestine and kidney. Not detected in brain, liver, muscle, and heart.

Its subcellular location is the cell membrane. It localises to the basolateral cell membrane. Associates with and regulates the activity of the sodium/potassium-transporting ATPase (NKA) which catalyzes the hydrolysis of ATP coupled with the exchange of Na(+) and K(+) ions across the plasma membrane. May increase NKA activity by increasing the apparent affinity for Na(+). Involved in down-regulation of E-cadherin which results in reduced cell adhesion. Promotes metastasis. In Mus musculus (Mouse), this protein is FXYD domain-containing ion transport regulator 5 (Fxyd5).